Consider the following 397-residue polypeptide: Probable sugar efflux transporter (397 aa).

Transmembrane regions (helical) follow at residues 15 to 35, 51 to 71, 80 to 100, 103 to 123, 137 to 157, 169 to 189, 209 to 229, 246 to 266, 277 to 297, 299 to 319, 333 to 353, and 365 to 385; these read VIVMAFAAFVFNTTEFVPVAL, GLMITIYAWIVSLCSLPCMLM, LLISLFILFIASHILSAFAWN, VLLIARAGVALTHSIFWSITA, QALGLLALGSSLAMVLGLPLG, TFTLIGVFAALILILIVRLLP, PMLITLYIFTILVISAHFTAY, KATAVLLIFGVSGVVASVLFS, LLSSVAILTLALICLYGVSGI, GAIFALVFIWGVAISALSLAM, VATAIYSGIYNIGIGGGALIG, and IGYVGAVLGAVSIIWFILMFL.

Belongs to the major facilitator superfamily. SotB (TC 2.A.1.2) family.

It localises to the cell inner membrane. Functionally, involved in the efflux of sugars. The physiological role may be the reduction of the intracellular concentration of toxic sugars or sugar metabolites. The protein is Probable sugar efflux transporter of Mannheimia succiniciproducens (strain KCTC 0769BP / MBEL55E).